A 234-amino-acid chain; its full sequence is Sugar fermentation stimulation protein A (234 aa).

Residues 201–220 (LLSEAQNKGVEVLAYKAELS) constitute a DNA-binding region (H-T-H motif).

It belongs to the SfsA family.

Its function is as follows. Binds to DNA non-specifically. Could be a regulatory factor involved in maltose metabolism. This Salmonella choleraesuis (strain SC-B67) protein is Sugar fermentation stimulation protein A.